Consider the following 185-residue polypeptide: Translocon-associated protein subunit gamma (185 aa).

At Met1 the chain carries N-acetylmethionine. Residues 1–27 (MAPKGGSKQQSEEDLLLQDFSRNLSAK) are Lumenal-facing. Residues Ser7 and Ser11 each carry the phosphoserine modification. Residues 28-48 (SSALFFGNAFIVSAIPIWLYW) form a helical membrane-spanning segment. Topologically, residues 49-54 (RIWHMD) are cytoplasmic. The chain crosses the membrane as a helical span at residues 55–76 (LIQSAVLYSVMTLVSTYLVAFA). Topologically, residues 77–135 (YKNVKFVLKHKVAQKREDAVSKEVTRKLSEADNRKMSRKEKDERILWKKNEVADYEATT) are lumenal. Residue Ser105 is modified to Phosphoserine. A helical membrane pass occupies residues 136–157 (FSIFYNNTLFLVLVIVASFFIL). Residues 158 to 163 (KNFNPT) are Cytoplasmic-facing. The chain crosses the membrane as a helical span at residues 164–184 (VNYILSISASSGLIALLSTGS).

This sequence belongs to the TRAP-gamma family. In terms of assembly, heterotetramer of TRAP-alpha, TRAP-beta, TRAP-delta and TRAP-gamma.

It localises to the endoplasmic reticulum membrane. Functionally, TRAP proteins are part of a complex whose function is to bind calcium to the ER membrane and thereby regulate the retention of ER resident proteins. The sequence is that of Translocon-associated protein subunit gamma (Ssr3) from Mus musculus (Mouse).